A 218-amino-acid chain; its full sequence is Transaldolase (218 aa).

Lys-83 acts as the Schiff-base intermediate with substrate in catalysis.

Belongs to the transaldolase family. Type 3B subfamily.

The protein localises to the cytoplasm. It catalyses the reaction D-sedoheptulose 7-phosphate + D-glyceraldehyde 3-phosphate = D-erythrose 4-phosphate + beta-D-fructose 6-phosphate. Its pathway is carbohydrate degradation; pentose phosphate pathway; D-glyceraldehyde 3-phosphate and beta-D-fructose 6-phosphate from D-ribose 5-phosphate and D-xylulose 5-phosphate (non-oxidative stage): step 2/3. In terms of biological role, transaldolase is important for the balance of metabolites in the pentose-phosphate pathway. Does not show fructose-6-P aldolase activity. The chain is Transaldolase (tal) from Thermotoga maritima (strain ATCC 43589 / DSM 3109 / JCM 10099 / NBRC 100826 / MSB8).